A 336-amino-acid chain; its full sequence is Dihydroorotate dehydrogenase (quinone) (336 aa).

Residues 62–66 and threonine 86 contribute to the FMN site; that span reads AGLDK. Lysine 66 provides a ligand contact to substrate. Residue 111-115 coordinates substrate; that stretch reads NRMGF. Residues asparagine 139 and asparagine 172 each coordinate FMN. Residue asparagine 172 coordinates substrate. The active-site Nucleophile is serine 175. Asparagine 177 provides a ligand contact to substrate. 2 residues coordinate FMN: lysine 217 and threonine 245. 246-247 provides a ligand contact to substrate; the sequence is NT. FMN contacts are provided by residues glycine 268, glycine 297, and 318 to 319; that span reads YS.

This sequence belongs to the dihydroorotate dehydrogenase family. Type 2 subfamily. In terms of assembly, monomer. The cofactor is FMN.

It is found in the cell membrane. The enzyme catalyses (S)-dihydroorotate + a quinone = orotate + a quinol. It participates in pyrimidine metabolism; UMP biosynthesis via de novo pathway; orotate from (S)-dihydroorotate (quinone route): step 1/1. In terms of biological role, catalyzes the conversion of dihydroorotate to orotate with quinone as electron acceptor. The chain is Dihydroorotate dehydrogenase (quinone) from Enterobacter sp. (strain 638).